The sequence spans 335 residues: MIRDEISVSIQTLRWKCIESRAYSKRLHYGRFALSPLHKGRADTIGIAMRRALLGEVEGTCITRVKLENIKHEYSAIIGIEESVHDILMNLKEIVFRSDSYGIREASIYIVGPRNVTAQDIILPPSVKIIDTTQHIARLTKSITSDIRLQIEKNRGYIIHSPNNYQDGIFPIDAVFMPVRDANYSIHSYGSGNEIREVLFLEIWTNGGLTPREALYEASRNLIDLFIPFLHGEEQNIDGMNNKKGSNMLPFPLSHVLTDTGETKEKIAFQLIFIDQLELPPKTYNSLRRANIHTLLDLLNYSREDLMRIEHFGKESVEQVLEVLQKLFAIDPPRN.

Positions 1 to 233 (MIRDEISVSI…DLFIPFLHGE (233 aa)) are alpha N-terminal domain (alpha-NTD). The tract at residues 264 to 335 (KEKIAFQLIF…KLFAIDPPRN (72 aa)) is alpha C-terminal domain (alpha-CTD).

Belongs to the RNA polymerase alpha chain family. In plastids the minimal PEP RNA polymerase catalytic core is composed of four subunits: alpha, beta, beta', and beta''. When a (nuclear-encoded) sigma factor is associated with the core the holoenzyme is formed, which can initiate transcription.

It localises to the plastid. It is found in the chloroplast. The enzyme catalyses RNA(n) + a ribonucleoside 5'-triphosphate = RNA(n+1) + diphosphate. In terms of biological role, DNA-dependent RNA polymerase catalyzes the transcription of DNA into RNA using the four ribonucleoside triphosphates as substrates. The sequence is that of DNA-directed RNA polymerase subunit alpha from Pinus thunbergii (Japanese black pine).